The sequence spans 141 residues: uncharacterized protein (141 aa).

This is an uncharacterized protein from Escherichia coli (strain K12).